Here is a 460-residue protein sequence, read N- to C-terminus: Bifunctional beta-D-glucosidase/beta-D-fucosidase (460 aa).

The Proton donor role is filled by Glu168. The active-site Nucleophile is Glu362.

This sequence belongs to the glycosyl hydrolase 1 family. Monomer.

The protein resides in the secreted. It catalyses the reaction Hydrolysis of terminal, non-reducing beta-D-glucosyl residues with release of beta-D-glucose.. It carries out the reaction Hydrolysis of terminal non-reducing beta-D-fucose residues in beta-D-fucosides.. Its activity is regulated as follows. Inhibited by Cu(2+), Ag(+) and Hg(+), but not by other cations such as Mg(2+), Ca(2+), Mn(2+) and Co(2+). Inhibited by 1-amino-1-deoxy-D-glucose and p-chloromercuribenzoic acid, but not by EDTA or dithiothreitol. Inhibited by the disaccharides sucrose, lactose and cellobiose. The monosaccharides D-fructose, D-mannose, D-xylose and D-glucose increase the beta-D-fucosidase activity, but not the beta-D-glucosidase activity. D-glucose inhibits the beta-D-glucosidase activity, but promotes the beta-D-fucosidase activity. D-fucose inhibits the beta-D-glucosidase activity and does not significantly affect the beta-D-fucosidase activity. In terms of biological role, bifunctional beta-D-glucosidase/beta-D-fucosidase. Activity towards pNP-beta-D-fucoside is about 80-85% of the activity towards pNP-beta-D-glucoside. Also has slight activity (less than 10%) towards pNP-beta-D-galactoside, and very low activity (less than 1%) towards pNP-beta-D-xyloside. Hydrolyzes laminaribiose, sophorose, cellobiose and gentobiose. Not active against maltose, pNP-alpha-D-glucoside or pNP-beta-L-fucoside. The protein is Bifunctional beta-D-glucosidase/beta-D-fucosidase of Bifidobacterium breve.